A 398-amino-acid chain; its full sequence is Leucine aminopeptidase 1 (398 aa).

A signal peptide spans 1-20; it reads MKFLQTSLIAAALPAALVSG. Residues 21-87 constitute a propeptide that is removed on maturation; that stretch reads RFVIENEGDN…LRAWTQSQAS (67 aa). N-linked (GlcNAc...) asparagine glycosylation is present at Asn179. 4 residues coordinate Zn(2+): His187, Asp206, Glu245, and Asp272. Cysteines 321 and 325 form a disulfide. Position 354 (His354) interacts with Zn(2+).

It belongs to the peptidase M28 family. M28E subfamily. Monomer. Zn(2+) is required as a cofactor.

The protein localises to the secreted. Its function is as follows. Extracellular aminopeptidase that allows assimilation of proteinaceous substrates. In Trichoderma harzianum (Hypocrea lixii), this protein is Leucine aminopeptidase 1 (lap1).